Here is a 174-residue protein sequence, read N- to C-terminus: Putative NADH dehydrogenase/NAD(P)H nitroreductase AF_2267 (174 aa).

107-112 (AARCLG) is an NAD(+) binding site.

This sequence belongs to the nitroreductase family. Requires FMN as cofactor.

The sequence is that of Putative NADH dehydrogenase/NAD(P)H nitroreductase AF_2267 from Archaeoglobus fulgidus (strain ATCC 49558 / DSM 4304 / JCM 9628 / NBRC 100126 / VC-16).